The chain runs to 218 residues: Small ribosomal subunit protein uS4 (218 aa).

One can recognise an S4 RNA-binding domain in the interval 111–175 (RRLQTQVLRL…SPLKNESHPE (65 aa)). The tract at residues 192–218 (KAAAEAKQAREKPPERGGGRRKRGGRR) is disordered. Residues 198 to 209 (KQAREKPPERGG) show a composition bias toward basic and acidic residues.

It belongs to the universal ribosomal protein uS4 family. As to quaternary structure, part of the 30S ribosomal subunit. Contacts protein S5. The interaction surface between S4 and S5 is involved in control of translational fidelity.

Its function is as follows. One of the primary rRNA binding proteins, it binds directly to 16S rRNA where it nucleates assembly of the body of the 30S subunit. Functionally, with S5 and S12 plays an important role in translational accuracy. The sequence is that of Small ribosomal subunit protein uS4 from Methanosarcina acetivorans (strain ATCC 35395 / DSM 2834 / JCM 12185 / C2A).